The primary structure comprises 560 residues: MESSRVVVGGGLPLANRRNSSFAKPKIQQGTFLPLSRINNVSAPQKCSLHTNPNPMFPFVTRRKSQTNPDCGVVKLGEEDDSCSSLDKLPEVNGVHTGVARPVDIKRELVMLSLPAIAGQAIDPLTLLMETAYIGRLGSVELGSAGVSMAIFNTISKLFNIPLLSVATSFVAEDIAKIAAQDLASEDSQSDIPSQGLPERKQLSSVSTALVLAIGIGIFEALALSLASGPFLRLMGIQSMSEMFIPARQFLVLRALGAPAYVVSLALQGIFRGFKDTKTPVYCLGIGNFLAVFLFPLFIYKFRMGVAGAAISSVISQYTVAILMLILLNKRVILLPPKIGSLKFGDYLKSGGFVLGRTLSVLVTMTVATSMAARQGVFAMAAHQICMQVWLAVSLLTDALASSGQALIASSASKRDFEGVKEVTTFVLKIGVVTGIALAIVLGMSFSSIAGLFSKDPEVLRIVRKGVLFVAATQPITALAFIFDGLHYGMSDFPYAACSMMVVGGISSAFMLYAPAGLGLSGVWVGLSMFMGLRMVAGFSRLMWRKGPWWFMHTSDKRLA.

A chloroplast-targeting transit peptide spans 1-75 (MESSRVVVGG…QTNPDCGVVK (75 aa)). Transmembrane regions (helical) follow at residues 109–129 (LVML…TLLM), 147–167 (VSMA…LSVA), 209–229 (ALVL…LASG), 250–270 (FLVL…LQGI), 280–300 (PVYC…LFIY), 308–328 (GAAI…LILL), 353–373 (FVLG…SMAA), 389–411 (VWLA…IASS), 426–446 (FVLK…GMSF), 466–486 (GVLF…FDGL), 495–515 (YAAC…LYAP), and 523–543 (VWVG…SRLM).

The protein belongs to the multi antimicrobial extrusion (MATE) (TC 2.A.66.1) family. In terms of tissue distribution, ubiquitous.

The protein localises to the plastid. It is found in the chloroplast membrane. The sequence is that of Protein DETOXIFICATION 45, chloroplastic from Arabidopsis thaliana (Mouse-ear cress).